Consider the following 380-residue polypeptide: Cytochrome b (380 aa).

Transmembrane regions (helical) follow at residues Phe33–Met53, Trp77–Ile98, Trp113–Leu133, and Phe178–Leu198. Heme b-binding residues include His83 and His97. His182 and His196 together coordinate heme b. Residue His201 participates in a ubiquinone binding. Helical transmembrane passes span Tyr226–Ala246, Leu288–His308, Leu320–Gly340, and Phe347–Pro367.

Belongs to the cytochrome b family. The cytochrome bc1 complex contains 3 respiratory subunits (MT-CYB, CYC1 and UQCRFS1), 2 core proteins (UQCRC1 and UQCRC2) and probably 6 low-molecular weight proteins. Heme b is required as a cofactor.

It localises to the mitochondrion inner membrane. Its function is as follows. Component of the ubiquinol-cytochrome c reductase complex (complex III or cytochrome b-c1 complex) that is part of the mitochondrial respiratory chain. The b-c1 complex mediates electron transfer from ubiquinol to cytochrome c. Contributes to the generation of a proton gradient across the mitochondrial membrane that is then used for ATP synthesis. The protein is Cytochrome b (mt-cyb) of Salmo trutta (Brown trout).